The chain runs to 341 residues: DNA-directed RNA polymerase subunit alpha (341 aa).

Residues 1 to 226 (MLIAQRPTIT…ELFGLVRELN (226 aa)) form an alpha N-terminal domain (alpha-NTD) region. The interval 241 to 341 (AALAADLALP…DQRYIETEQL (101 aa)) is alpha C-terminal domain (alpha-CTD).

It belongs to the RNA polymerase alpha chain family. In terms of assembly, homodimer. The RNAP catalytic core consists of 2 alpha, 1 beta, 1 beta' and 1 omega subunit. When a sigma factor is associated with the core the holoenzyme is formed, which can initiate transcription.

The catalysed reaction is RNA(n) + a ribonucleoside 5'-triphosphate = RNA(n+1) + diphosphate. Functionally, DNA-dependent RNA polymerase catalyzes the transcription of DNA into RNA using the four ribonucleoside triphosphates as substrates. This is DNA-directed RNA polymerase subunit alpha from Acidothermus cellulolyticus (strain ATCC 43068 / DSM 8971 / 11B).